We begin with the raw amino-acid sequence, 101 residues long: NADH-quinone oxidoreductase subunit K (101 aa).

The next 3 helical transmembrane spans lie at 4–24 (LSHY…GIFL), 30–50 (IILL…FVAF), and 61–81 (IFVF…LAIL).

The protein belongs to the complex I subunit 4L family. In terms of assembly, NDH-1 is composed of 14 different subunits. Subunits NuoA, H, J, K, L, M, N constitute the membrane sector of the complex.

The protein localises to the cell inner membrane. It catalyses the reaction a quinone + NADH + 5 H(+)(in) = a quinol + NAD(+) + 4 H(+)(out). Functionally, NDH-1 shuttles electrons from NADH, via FMN and iron-sulfur (Fe-S) centers, to quinones in the respiratory chain. The immediate electron acceptor for the enzyme in this species is believed to be ubiquinone. Couples the redox reaction to proton translocation (for every two electrons transferred, four hydrogen ions are translocated across the cytoplasmic membrane), and thus conserves the redox energy in a proton gradient. This Nitrosomonas europaea (strain ATCC 19718 / CIP 103999 / KCTC 2705 / NBRC 14298) protein is NADH-quinone oxidoreductase subunit K.